We begin with the raw amino-acid sequence, 548 residues long: MAASSADKCRPLANFHPSVWGYHFLSYTHEITNQEKVEVDEYKETIRKMLVETCDNSTQKLVLIDAMQRLGVAYHFDNEIETSIQNIFDASSKQNDNDNNLYVVSLRFRLVRQQGHYMSSDVFKQFTNQDGKFKETLTNDVQGLLSLYEASHLRVRNEEILEEALTFTTTHLESIVSNLSNNNNSLKVEVGEALTQPIRMTLPRMGARKYISIYENNDAHHHLLLKFAKLDFNMLQKFHQRELSDLTRWWKDLDFANKYPYARDRLVECYFWILGVYFEPKYSRARKMMTKVLNLTSIIDDTFDAYATFDELVTFNDAIQRWDANAIDSIQPYMRPAYQALLDIYSEMEQVLSKEGKLDRVYYAKNEMKKLVRAYFKETQWLNDCDHIPKYEEQVENAIVSAGYMMISTTCLVGIEEFISHETFEWLMNESVIVRASALIARAMNDIVGHEDEQERGHVASLIECYMKDYGASKQETYIKFLKEVTNAWKDINKQFFRPTEVPMFVLERVLNLTRVADTLYKEKDTYTNAKGKLKNMINSILIESVKI.

Mg(2+) contacts are provided by D300, D304, and E453. The short motif at 300–304 (DDTFD) is the DDXXD motif element.

Belongs to the terpene synthase family. Tpsa subfamily. The cofactor is Mg(2+). Mn(2+) is required as a cofactor. Mostly expressed in stem and trichomes, to a lower extent in roots, leaves and flowers and, at low levels, in fruits.

It localises to the cytoplasm. It catalyses the reaction (2E,6E)-farnesyl diphosphate = germacrene C + diphosphate. The enzyme catalyses (2E)-geranyl diphosphate = terpinolene + diphosphate. It carries out the reaction (2E)-geranyl diphosphate = limonene + diphosphate. The catalysed reaction is (2E)-geranyl diphosphate = beta-myrcene + diphosphate. It catalyses the reaction (2Z,6Z)-farnesyl diphosphate = germacrene C + diphosphate. The protein operates within secondary metabolite biosynthesis; terpenoid biosynthesis. In terms of biological role, involved in the biosynthesis of germacrene C, one of the most abundant sesquiterpene in the leaf oil of tomato. Produces mainly germacrene C, but also smaller amounts of germacrene A, B and D when used with farnesyl diphosphate (FPP) as substrate; able to use both (2E,6E)-farnesyl diphosphate ((EE)-FPP) and (2Z,6Z)-farnesyl diphosphate ((ZZ)-FPP). No or low activity with geranylgeranyl diphosphate (GGPP). Can act with a low efficiency as a monoterpene synthase with geranyl diphosphate (GPP) as substrate, thus producing beta-myrcene, limonene and terpinolene. The polypeptide is Sesquiterpene synthase 9 (Solanum lycopersicum (Tomato)).